A 759-amino-acid polypeptide reads, in one-letter code: Arylphorin subunit A4 (759 aa).

Residues 1–16 (MKIAIVLLAIIALVAA) form the signal peptide.

It belongs to the hemocyanin family. Heterohexamer. As to expression, fat body.

The protein resides in the secreted. Its subcellular location is the extracellular space. Functionally, arylphorin is a larval storage protein (LSP) which may serve as a storage protein used primarily as a source of aromatic amino acids for protein synthesis during metamorphosis. It is a constituent of the sclerotizing system of the cuticle, and serves as a carrier for ecdysteroid hormone. This chain is Arylphorin subunit A4, found in Calliphora vicina (Blue blowfly).